Here is a 227-residue protein sequence, read N- to C-terminus: Ribose-5-phosphate isomerase A (227 aa).

Substrate-binding positions include 30-33, 86-89, and 99-102; these read TGST, DGAD, and KGMG. Glu108 functions as the Proton acceptor in the catalytic mechanism. A substrate-binding site is contributed by Lys126.

Belongs to the ribose 5-phosphate isomerase family. Homodimer.

It catalyses the reaction aldehydo-D-ribose 5-phosphate = D-ribulose 5-phosphate. Its pathway is carbohydrate degradation; pentose phosphate pathway; D-ribose 5-phosphate from D-ribulose 5-phosphate (non-oxidative stage): step 1/1. Its function is as follows. Catalyzes the reversible conversion of ribose-5-phosphate to ribulose 5-phosphate. This chain is Ribose-5-phosphate isomerase A, found in Thermus thermophilus (strain ATCC 27634 / DSM 579 / HB8).